The sequence spans 243 residues: MSDNEKETQVAEETQNTQATAESSNNDERRGRRNNRGGEGRRGDRRGRREDNHENEMLDRVVTINRVSKTHKGGRTFSFAALVVVGDGNGTVGVGYGKSREVPAAIAKGQLDAKKHLFNVPRIRGTVTHPVTGHDHAGTVMLRPAAPGTGVIAGSAVRAVMECAGITDILTKSMGSATAVNVVRATVDALKQLEEPEEIAARRGLSVQEVAPDQLLRERAAGIAEARKAREEAKAEAAAKDGE.

Residues 1–54 (MSDNEKETQVAEETQNTQATAESSNNDERRGRRNNRGGEGRRGDRRGRREDNHE) form a disordered region. Residues 11–24 (AEETQNTQATAESS) show a composition bias toward polar residues. Residues 26–54 (NDERRGRRNNRGGEGRRGDRRGRREDNHE) are compositionally biased toward basic and acidic residues. One can recognise an S5 DRBM domain in the interval 57–120 (MLDRVVTINR…LDAKKHLFNV (64 aa)).

Belongs to the universal ribosomal protein uS5 family. In terms of assembly, part of the 30S ribosomal subunit. Contacts proteins S4 and S8.

In terms of biological role, with S4 and S12 plays an important role in translational accuracy. Its function is as follows. Located at the back of the 30S subunit body where it stabilizes the conformation of the head with respect to the body. This chain is Small ribosomal subunit protein uS5, found in Bifidobacterium animalis subsp. lactis (strain AD011).